Consider the following 329-residue polypeptide: 3-isopropylmalate dehydrogenase (329 aa).

Substrate contacts are provided by R83, R93, R114, and D200. Mg(2+) contacts are provided by D200, D224, and D228. 257–269 (GSAPQIAGKNIAN) provides a ligand contact to NAD(+).

Belongs to the isocitrate and isopropylmalate dehydrogenases family. Homotetramer. It depends on Mg(2+) as a cofactor. Requires Mn(2+) as cofactor.

Its subcellular location is the cytoplasm. The enzyme catalyses (2R,3S)-3-isopropylmalate + NAD(+) = 4-methyl-2-oxopentanoate + CO2 + NADH. It functions in the pathway amino-acid biosynthesis; L-leucine biosynthesis; L-leucine from 3-methyl-2-oxobutanoate: step 3/4. Catalyzes the oxidation of 3-carboxy-2-hydroxy-4-methylpentanoate (3-isopropylmalate) to 3-carboxy-4-methyl-2-oxopentanoate. The product decarboxylates to 4-methyl-2 oxopentanoate. The chain is 3-isopropylmalate dehydrogenase (leuB) from Methanothermobacter thermautotrophicus (strain ATCC 29096 / DSM 1053 / JCM 10044 / NBRC 100330 / Delta H) (Methanobacterium thermoautotrophicum).